Here is a 799-residue protein sequence, read N- to C-terminus: Dipeptidyl peptidase family member 1 (799 aa).

Residues 1 to 31 (MTAEADLLEGYDEELGGNESQKRDCKGITTA) lie on the Cytoplasmic side of the membrane. Residues 32–52 (IVVVLLILVMIFAALVFFTPL) form a helical; Signal-anchor for type II membrane protein membrane-spanning segment. Topologically, residues 53–799 (FAAKSFGSWR…FLRQCFYTDK (747 aa)) are lumenal. N-linked (GlcNAc...) asparagine glycans are attached at residues Asn-64, Asn-138, Asn-267, and Asn-335. Cys-474 and Cys-477 are disulfide-bonded. An N-linked (GlcNAc...) asparagine glycan is attached at Asn-481. Cys-482 and Cys-500 are joined by a disulfide. Asn-512 carries N-linked (GlcNAc...) asparagine glycosylation. Active-site charge relay system residues include Ser-669, Asp-742, and His-774. Cysteines 689 and 794 form a disulfide.

It belongs to the peptidase S9B family. DPPIV subfamily.

Its subcellular location is the cell membrane. In terms of biological role, removes N-terminal dipeptides sequentially from polypeptides. Essential for control of distal tip cell migration. This chain is Dipeptidyl peptidase family member 1 (dpf-1), found in Caenorhabditis elegans.